Consider the following 495-residue polypeptide: Heat stress transcription factor A-1a (495 aa).

The DNA-binding element occupies 50-144 (PPPFLSKTYD…LLKKISRRKS (95 aa)). Positions 140-164 (SRRKSVQGHGSSSSNPQSQQLSQGQ) are disordered. Low complexity predominate over residues 146–164 (QGHGSSSSNPQSQQLSQGQ). The hydrophobic repeat HR-A/B stretch occupies residues 172-238 (SCVEVGKFGL…QIMSFLAKAV (67 aa)). The disordered stretch occupies residues 255 to 288 (NMHVTEANKKRRLREDSTAATESNSHSHSLEASD). A Nuclear localization signal motif is present at residues 262–268 (NKKRRLR). The span at 272–281 (TAATESNSHS) shows a compositional bias: polar residues. The AHA signature appears at 433 to 442 (FEFLEEYMPE). Residues 445-477 (VFGDATTLENNNNNNNNNNNNNNNNNNNNTNGR) form a disordered region. Positions 454–473 (NNNNNNNNNNNNNNNNNNNN) are enriched in low complexity. The Nuclear export signal motif lies at 482-489 (LIEELGLL).

This sequence belongs to the HSF family. Class A subfamily. In terms of assembly, homotrimer. Interacts with HSP70-1 and HSP70-4. Binds to CRK1. Binds to HSBP. Exhibits temperature-dependent phosphorylation. Phosphorylated by CRK1. As to expression, constitutively expressed.

The protein localises to the cytoplasm. Its subcellular location is the nucleus. In terms of biological role, transcriptional activator that specifically binds DNA sequence 5'-AGAAnnTTCT-3' known as heat shock promoter elements (HSE). The protein is Heat stress transcription factor A-1a (HSFA1A) of Arabidopsis thaliana (Mouse-ear cress).